A 421-amino-acid chain; its full sequence is MEEYKVTLDGPAPWGFRLQGGKDFNMPLSISRLTPGGKSELAGVNVGDWLLQIEGDSTASMTHIEAQNKIRASSNKLGLVLSRFAVGANHPKGVHTPESQGRKYNFAPSTALNKIARPFGSGTPPPDNSRPVQVTKPVAYNPPPTSYPSSQMPQGQLQNGQKSRTVSNVSGKDTTDHPIPPAPSTGPAVRPPWTTDPTFADRYAPDKTTTVMTKHTQPATPTPAQSRNSILQAAQVPSSGDKTPVCSQCNKIIRGRFLLALGRYYHPEEFTCSQCHKVLEEGGFFEEKGSIFCPCCYDARFAPNCAKCKKKITGEIMHALKMTWHVPCFTCAYCKTPIRNRAFYMEDGKPYCEKDYEQMFGTKCRGCDFKIDAGDRFLEALGFSWHDTCFVCAICQINLEGKTFYSKKDKPLCKTHAFSNV.

Positions 1–85 (MEEYKVTLDG…KLGLVLSRFA (85 aa)) constitute a PDZ domain. The interval 115–193 (IARPFGSGTP…STGPAVRPPW (79 aa)) is disordered. Residues 147–172 (YPSSQMPQGQLQNGQKSRTVSNVSGK) are compositionally biased toward polar residues. 3 consecutive LIM zinc-binding domains span residues 244–302 (PVCS…ARFA), 303–362 (PNCA…MFGT), and 363–421 (KCRG…FSNV).

The protein localises to the cytoplasm. It localises to the cytoskeleton. May function as a scaffold on which the coordinated assembly of proteins can occur. May play a role as an adapter that, via its PDZ domain, localizes LIM-binding proteins to actin filaments of both skeletal muscle and nonmuscle tissues. This Xenopus laevis (African clawed frog) protein is PDZ and LIM domain protein 7 (pdlim7).